The primary structure comprises 163 residues: uncharacterized protein (163 aa).

The interval 144–163 (WSHSQSQLGTPGRGKGALGF) is disordered. Positions 154-163 (PGRGKGALGF) are enriched in gly residues.

This is an uncharacterized protein from Homo sapiens (Human).